A 144-amino-acid chain; its full sequence is MAASKVKQDMPPPGGYGPIDYKRNLPRRGLSGYSMLAIGIGTLIYGHWSIMKWNRERRRLQIEDFEARIALLPLLQAETDRRTLQMLRENLEEEAIIMKDVPDWKVGESVFHTTRWVPPLIGELYGLRTTEEALHASHGFMWYM.

An N-acetylalanine modification is found at A2. Residues 30–51 (LSGYSMLAIGIGTLIYGHWSIM) traverse the membrane as a helical segment.

Belongs to the complex I NDUFA13 subunit family. In terms of assembly, complex I is composed of 45 different subunits. Interacts with CARD15, but not with CARD4. Interacts with STAT3, but not with STAT1, STAT2 and STAT5A. Interacts with OLFM4.

It is found in the mitochondrion inner membrane. It localises to the nucleus. Functionally, accessory subunit of the mitochondrial membrane respiratory chain NADH dehydrogenase (Complex I), that is believed not to be involved in catalysis. Complex I functions in the transfer of electrons from NADH to the respiratory chain. The immediate electron acceptor for the enzyme is believed to be ubiquinone. Involved in the interferon/all-trans-retinoic acid (IFN/RA) induced cell death. This apoptotic activity is inhibited by interaction with viral IRF1. Prevents the transactivation of STAT3 target genes. May play a role in CARD15-mediated innate mucosal responses and serve to regulate intestinal epithelial cell responses to microbes. The sequence is that of NADH dehydrogenase [ubiquinone] 1 alpha subcomplex subunit 13 (NDUFA13) from Pan troglodytes (Chimpanzee).